The following is an 804-amino-acid chain: Probable exo-1,4-beta-xylosidase xlnD (804 aa).

The signal sequence occupies residues 1–17; sequence MAVAALALLALLPQALG. N-linked (GlcNAc...) asparagine glycosylation is found at Asn20, Asn115, Asn139, Asn234, and Asn243. Residue Asp307 is part of the active site. Asn349, Asn382, Asn404, Asn433, Asn444, Asn485, Asn489, Asn621, Asn652, Asn666, Asn688, and Asn710 each carry an N-linked (GlcNAc...) asparagine glycan.

It belongs to the glycosyl hydrolase 3 family.

It is found in the secreted. It carries out the reaction Hydrolysis of (1-&gt;4)-beta-D-xylans, to remove successive D-xylose residues from the non-reducing termini.. It functions in the pathway glycan degradation; xylan degradation. In terms of biological role, xylan 1,4-beta-xylosidase involved in the hydrolysis of xylan, a major structural heterogeneous polysaccharide found in plant biomass representing the second most abundant polysaccharide in the biosphere, after cellulose. The polypeptide is Probable exo-1,4-beta-xylosidase xlnD (xlnD) (Aspergillus japonicus).